The following is a 215-amino-acid chain: Putative glycosyltransferase ALG1L2 (215 aa).

Positions 40 to 66 are disordered; it reads PFRARSEPEDPDTERSAFTERDSGSGL. Positions 43-62 are enriched in basic and acidic residues; the sequence is ARSEPEDPDTERSAFTERDS.

The protein belongs to the glycosyltransferase group 1 family.

In terms of biological role, putative glycosyltransferase. This chain is Putative glycosyltransferase ALG1L2 (ALG1L2), found in Homo sapiens (Human).